An 85-amino-acid chain; its full sequence is Probable oxaloacetate decarboxylase gamma chain (85 aa).

Residues 11–33 (AAALMVTGMGVVFIFLTILIFLV) form a helical membrane-spanning segment.

It belongs to the OadG family. Heterotrimer of an alpha, a beta and a gamma subunit. It depends on Na(+) as a cofactor.

It is found in the cell membrane. It carries out the reaction oxaloacetate + 2 Na(+)(in) + H(+) = pyruvate + 2 Na(+)(out) + CO2. In terms of biological role, catalyzes the decarboxylation of oxaloacetate coupled to Na(+) translocation. The sequence is that of Probable oxaloacetate decarboxylase gamma chain from Vibrio vulnificus (strain CMCP6).